A 384-amino-acid polypeptide reads, in one-letter code: DNA polymerase IV (384 aa).

The UmuC domain occupies 5–182 (IIHVDMDAFF…LPVTKVHGIG (178 aa)). Mg(2+)-binding residues include Asp-9, Met-10, and Asp-103. Glu-104 is a catalytic residue.

Belongs to the DNA polymerase type-Y family. Monomer. Mg(2+) is required as a cofactor.

Its subcellular location is the cytoplasm. It carries out the reaction DNA(n) + a 2'-deoxyribonucleoside 5'-triphosphate = DNA(n+1) + diphosphate. Its function is as follows. Poorly processive, error-prone DNA polymerase involved in translesion repair and untargeted mutagenesis. Copies undamaged DNA at stalled replication forks, which arise in vivo from mismatched or misaligned primer ends. These misaligned primers can be extended by PolIV. Exhibits no 3'-5' exonuclease (proofreading) activity. Involved in translesional synthesis. Primer extension fidelity in vitro is temperature-dependent. Inserts a correct base opposite templating bases at 70 degrees Celsius, but at 37 degrees Celsius in addition to correct base pairing, base transitions, transversions and frameshifts can occur. Preferably forms erroneous base pairs C:T. Bypasses 8-oxo-dG oxidative damage by incorporating dATP or dCTP opposite of the damaged DNA template site at both temperatures in vitro. The polypeptide is DNA polymerase IV (Caldanaerobacter subterraneus subsp. tengcongensis (strain DSM 15242 / JCM 11007 / NBRC 100824 / MB4) (Thermoanaerobacter tengcongensis)).